The sequence spans 560 residues: Arginine--tRNA ligase (560 aa).

A 'HIGH' region motif is present at residues 121-131 (PNIAKPFSMGH).

It belongs to the class-I aminoacyl-tRNA synthetase family. Monomer.

It is found in the cytoplasm. The catalysed reaction is tRNA(Arg) + L-arginine + ATP = L-arginyl-tRNA(Arg) + AMP + diphosphate. The polypeptide is Arginine--tRNA ligase (Exiguobacterium sibiricum (strain DSM 17290 / CCUG 55495 / CIP 109462 / JCM 13490 / 255-15)).